We begin with the raw amino-acid sequence, 910 residues long: Epithelial discoidin domain-containing receptor 1 (910 aa).

Residues 1–19 (MGTGTLSSLLLLLLLVTIG) form the signal peptide. At 22 to 414 (DMKGHFDPAK…VAKAEGSPTA (393 aa)) the chain is on the extracellular side. An F5/8 type C domain is found at 32-186 (CRYALGMQDR…VCLRVELYGC (155 aa)). Disulfide bonds link C32/C186 and C75/C178. The interval 193-368 (LSYTAPVGQT…LFSEISFISD (176 aa)) is DS-like domain. Ca(2+) is bound by residues N212, Q231, D234, V236, Y254, and Y256. N-linked (GlcNAc...) asparagine glycosylation occurs at N212. N261 is a glycosylation site (N-linked (GlcNAc...) asparagine). C304 and C349 are joined by a disulfide. S361 and E362 together coordinate Ca(2+). 2 N-linked (GlcNAc...) asparagine glycosylation sites follow: N371 and N391. The helical transmembrane segment at 415–435 (ILIGCLVAIILLLLLIIALML) threads the bilayer. Residues 436–910 (WRLHWRRLLS…FLADDALNTV (475 aa)) lie on the Cytoplasmic side of the membrane. A disordered region spans residues 467–494 (ILINNRPGPREPPPYQEPRPRGTPTHSA). A PPxY motif motif is present at residues 478-481 (PPPY). Phosphotyrosine; by autocatalysis is present on residues Y481, Y510, and Y517. Positions 607–902 (LRFKEKLGEG…PPFSQLHRFL (296 aa)) constitute a Protein kinase domain. Residues 613 to 621 (LGEGQFGEV) and K652 each bind ATP. The residue at position 737 (Y737) is a Phosphotyrosine; by autocatalysis. D763 functions as the Proton acceptor in the catalytic mechanism. Phosphotyrosine; by autocatalysis occurs at positions 789, 793, and 794.

The protein belongs to the protein kinase superfamily. Tyr protein kinase family. Insulin receptor subfamily. In terms of assembly, homodimer. Interacts (via PPxY motif) with WWC1 (via WW domains) in a collagen-regulated manner. Forms a tripartite complex with WWC1 and PRKCZ, but predominantly in the absence of collagen. Interacts (tyrosine phosphorylated) with SHC1. Interacts with SRC. Interacts with MYH9. Interacts with CDH1. Interacts with PTPN11. Interacts with NCK2. Autophosphorylated in response to fibrillar collagen binding. As to expression, various embryonic and adult tissues; also proliferative zones of the developing brain; hippocampal neurons.

It is found in the cell membrane. It carries out the reaction L-tyrosyl-[protein] + ATP = O-phospho-L-tyrosyl-[protein] + ADP + H(+). In terms of biological role, tyrosine kinase that functions as a cell surface receptor for fibrillar collagen and regulates cell attachment to the extracellular matrix, remodeling of the extracellular matrix, cell migration, differentiation, survival and cell proliferation. Collagen binding triggers a signaling pathway that involves SRC and leads to the activation of MAP kinases. Regulates remodeling of the extracellular matrix by up-regulation of the matrix metalloproteinases MMP2, MMP7 and MMP9, and thereby facilitates cell migration and wound healing. Promotes smooth muscle cell migration, and thereby contributes to arterial wound healing. Also plays a role in tumor cell invasion. Phosphorylates PTPN11. Required for normal blastocyst implantation during pregnancy, for normal mammary gland differentiation and normal lactation. Required for normal ear morphology and normal hearing. This chain is Epithelial discoidin domain-containing receptor 1 (Ddr1), found in Rattus norvegicus (Rat).